Reading from the N-terminus, the 868-residue chain is Leucine--tRNA ligase (868 aa).

The short motif at 42-52 (PYPSGKLHMGH) is the 'HIGH' region element. The short motif at 624–628 (TMSKS) is the 'KMSKS' region element. Lys627 is a binding site for ATP.

Belongs to the class-I aminoacyl-tRNA synthetase family.

The protein resides in the cytoplasm. It catalyses the reaction tRNA(Leu) + L-leucine + ATP = L-leucyl-tRNA(Leu) + AMP + diphosphate. The polypeptide is Leucine--tRNA ligase (Nitrosomonas eutropha (strain DSM 101675 / C91 / Nm57)).